The sequence spans 190 residues: Lipid A acyltransferase PagP (190 aa).

The first 24 residues, 1 to 24 (MNRYLLTTLSAPLLALFFSFSLQA), serve as a signal peptide directing secretion. Catalysis depends on residues histidine 62, aspartate 105, and serine 106.

The protein belongs to the lipid A palmitoyltransferase family. As to quaternary structure, homodimer.

The protein localises to the cell outer membrane. The enzyme catalyses a lipid A + a 1,2-diacyl-sn-glycero-3-phosphocholine = a hepta-acyl lipid A + a 2-acyl-sn-glycero-3-phosphocholine. It catalyses the reaction a lipid IVA + a 1,2-diacyl-sn-glycero-3-phosphocholine = a lipid IVB + a 2-acyl-sn-glycero-3-phosphocholine. The catalysed reaction is a lipid IIA + a 1,2-diacyl-sn-glycero-3-phosphocholine = a lipid IIB + a 2-acyl-sn-glycero-3-phosphocholine. In terms of biological role, transfers a fatty acid residue from the sn-1 position of a phospholipid to the N-linked hydroxyfatty acid chain on the proximal unit of lipid A or its precursors. The polypeptide is Lipid A acyltransferase PagP (Pantoea ananatis (strain LMG 20103)).